The chain runs to 348 residues: NADH-ubiquinone oxidoreductase chain 2 (348 aa).

10 helical membrane passes run 3–23 (PFIL…TFAS), 24–44 (SHWL…IPLM), 60–80 (FITQ…NAWI), 95–115 (ASML…HFWL), 136–156 (LAPF…ITFL), 177–197 (ILAY…QFNQ), 198–218 (QLAL…FMIF), 239–259 (LTAI…LSGF), 273–293 (DIPL…YFYL), and 325–345 (LAIS…TLAL).

It belongs to the complex I subunit 2 family.

The protein localises to the mitochondrion inner membrane. The enzyme catalyses a ubiquinone + NADH + 5 H(+)(in) = a ubiquinol + NAD(+) + 4 H(+)(out). In terms of biological role, core subunit of the mitochondrial membrane respiratory chain NADH dehydrogenase (Complex I) that is believed to belong to the minimal assembly required for catalysis. Complex I functions in the transfer of electrons from NADH to the respiratory chain. The immediate electron acceptor for the enzyme is believed to be ubiquinone. This is NADH-ubiquinone oxidoreductase chain 2 (MT-ND2) from Gadus morhua (Atlantic cod).